The chain runs to 373 residues: XK-related protein 9 (373 aa).

Helical transmembrane passes span 8–28 (FMMS…DIWV), 38–58 (YVFS…AQCF), 166–186 (AAIM…QVAL), 203–223 (ITYL…VVLL), 224–244 (LFLN…LGII), 256–276 (CISM…FTFF), 295–315 (VLGT…IFNP), and 318–338 (FIPI…FLIV).

Belongs to the XK family. In terms of processing, undergoes proteolytic processing by caspase-3 (CASP3), caspase-6 (CASP6) and caspase-7 (CASP7) to generate the XK-related protein 9, processed form, leading to its activation.

The protein localises to the cell membrane. The enzyme catalyses a 1,2-diacyl-sn-glycero-3-phospho-L-serine(in) = a 1,2-diacyl-sn-glycero-3-phospho-L-serine(out). Its activity is regulated as follows. Activated upon caspase cleavage to generate the XK-related protein 9, processed form. Does not act prior the onset of apoptosis. In terms of biological role, phospholipid scramblase that promotes phosphatidylserine exposure on apoptotic cell surface. Phosphatidylserine is a specific marker only present at the surface of apoptotic cells and acts as a specific signal for engulfment. In Homo sapiens (Human), this protein is XK-related protein 9.